Consider the following 145-residue polypeptide: Large ribosomal subunit protein uL13 (145 aa).

The protein belongs to the universal ribosomal protein uL13 family. In terms of assembly, part of the 50S ribosomal subunit.

Functionally, this protein is one of the early assembly proteins of the 50S ribosomal subunit, although it is not seen to bind rRNA by itself. It is important during the early stages of 50S assembly. This Macrococcus caseolyticus (strain JCSC5402) (Macrococcoides caseolyticum) protein is Large ribosomal subunit protein uL13.